The primary structure comprises 308 residues: Aspartate carbamoyltransferase catalytic subunit (308 aa).

Carbamoyl phosphate is bound by residues Arg57 and Thr58. L-aspartate is bound at residue Lys86. Arg107, His135, and Gln138 together coordinate carbamoyl phosphate. The L-aspartate site is built by Arg168 and Arg229. 2 residues coordinate carbamoyl phosphate: Leu268 and Pro269.

This sequence belongs to the aspartate/ornithine carbamoyltransferase superfamily. ATCase family. In terms of assembly, heterooligomer of catalytic and regulatory chains.

It carries out the reaction carbamoyl phosphate + L-aspartate = N-carbamoyl-L-aspartate + phosphate + H(+). It participates in pyrimidine metabolism; UMP biosynthesis via de novo pathway; (S)-dihydroorotate from bicarbonate: step 2/3. In terms of biological role, catalyzes the condensation of carbamoyl phosphate and aspartate to form carbamoyl aspartate and inorganic phosphate, the committed step in the de novo pyrimidine nucleotide biosynthesis pathway. The sequence is that of Aspartate carbamoyltransferase catalytic subunit from Pyrococcus abyssi (strain GE5 / Orsay).